We begin with the raw amino-acid sequence, 510 residues long: NAD(P)H-quinone oxidoreductase subunit 2 A, chloroplastic (510 aa).

Transmembrane regions (helical) follow at residues 24-44, 57-77, 99-119, 124-144, 149-169, 183-203, 227-247, 295-315, 323-343, 354-374, 395-415, 418-438, and 482-502; these read LLLF…GLIL, MPWL…ALLF, IFQF…VEYI, MAIT…MFLC, LITI…LSGY, YLLM…WLYG, PGIS…LSPA, WHLL…LIAI, MLAY…IVGD, YMLF…LFGL, ALSL…AGFF, LHLF…IGLL, and LSMI…SPII.

This sequence belongs to the complex I subunit 2 family. In terms of assembly, NDH is composed of at least 16 different subunits, 5 of which are encoded in the nucleus.

The protein resides in the plastid. It localises to the chloroplast thylakoid membrane. The catalysed reaction is a plastoquinone + NADH + (n+1) H(+)(in) = a plastoquinol + NAD(+) + n H(+)(out). The enzyme catalyses a plastoquinone + NADPH + (n+1) H(+)(in) = a plastoquinol + NADP(+) + n H(+)(out). Its function is as follows. NDH shuttles electrons from NAD(P)H:plastoquinone, via FMN and iron-sulfur (Fe-S) centers, to quinones in the photosynthetic chain and possibly in a chloroplast respiratory chain. The immediate electron acceptor for the enzyme in this species is believed to be plastoquinone. Couples the redox reaction to proton translocation, and thus conserves the redox energy in a proton gradient. This chain is NAD(P)H-quinone oxidoreductase subunit 2 A, chloroplastic, found in Populus trichocarpa (Western balsam poplar).